The primary structure comprises 169 residues: CKLF-like MARVEL transmembrane domain-containing protein 1 (169 aa).

In terms of domain architecture, MARVEL spans 17–135 (NLKQPETAAA…DAFVVTTKMR (119 aa)). Transmembrane regions (helical) follow at residues 22 to 42 (ETAAALSLILGALACFIITQA), 46 to 66 (FITITSLEICIVVFFILIYVL), 79 to 99 (LLDLTNSIITAVFLSVVAILA), and 110 to 130 (YVGGSLCLTAVIVCCIDAFVV).

The protein belongs to the chemokine-like factor family. Highly expressed in testis.

It is found in the membrane. This chain is CKLF-like MARVEL transmembrane domain-containing protein 1 (CMTM1), found in Homo sapiens (Human).